Reading from the N-terminus, the 356-residue chain is Dihydroorotate dehydrogenase (quinone) (356 aa).

FMN is bound by residues 66 to 70 (AGFDK) and Thr90. Lys70 contacts substrate. Position 115–119 (115–119 (NRMGF)) interacts with substrate. Residues Asn143 and Asn176 each contribute to the FMN site. Asn176 lines the substrate pocket. The active-site Nucleophile is Ser179. Asn181 serves as a coordination point for substrate. The FMN site is built by Lys212 and Thr240. 241 to 242 (NT) is a binding site for substrate. Residues Gly266, Gly295, and 316–317 (YT) each bind FMN.

Belongs to the dihydroorotate dehydrogenase family. Type 2 subfamily. In terms of assembly, monomer. FMN is required as a cofactor.

It localises to the cell membrane. The enzyme catalyses (S)-dihydroorotate + a quinone = orotate + a quinol. Its pathway is pyrimidine metabolism; UMP biosynthesis via de novo pathway; orotate from (S)-dihydroorotate (quinone route): step 1/1. Catalyzes the conversion of dihydroorotate to orotate with quinone as electron acceptor. The sequence is that of Dihydroorotate dehydrogenase (quinone) from Rhodococcus opacus (strain B4).